The chain runs to 215 residues: Cytochrome b6 (215 aa).

Residues isoleucine 32–phenylalanine 52 form a helical membrane-spanning segment. Cysteine 35 lines the heme c pocket. Histidine 86 and histidine 100 together coordinate heme b. Transmembrane regions (helical) follow at residues alanine 90–phenylalanine 110, leucine 116–tyrosine 136, and alanine 186–isoleucine 206. Heme b-binding residues include histidine 187 and histidine 202.

This sequence belongs to the cytochrome b family. PetB subfamily. The 4 large subunits of the cytochrome b6-f complex are cytochrome b6, subunit IV (17 kDa polypeptide, PetD), cytochrome f and the Rieske protein, while the 4 small subunits are PetG, PetL, PetM and PetN. The complex functions as a dimer. Requires heme b as cofactor. Heme c is required as a cofactor.

It is found in the cellular thylakoid membrane. Functionally, component of the cytochrome b6-f complex, which mediates electron transfer between photosystem II (PSII) and photosystem I (PSI), cyclic electron flow around PSI, and state transitions. This is Cytochrome b6 from Trichormus variabilis (strain ATCC 29413 / PCC 7937) (Anabaena variabilis).